Consider the following 609-residue polypeptide: Beta-(1--&gt;2)glucan export ATP-binding/permease protein NdvA (609 aa).

Positions 21–311 (GWILAGANLL…VVSFINSVFM (291 aa)) constitute an ABC transmembrane type-1 domain. A run of 6 helical transmembrane segments spans residues 22 to 42 (WILAGANLLLAGAQFAEPVLF), 68 to 88 (LLAVWAAFGLFTILCGVTVAL), 146 to 166 (EHFAAMMSLVVLLPLSLYINW), 167 to 187 (RLAILLFALCIVFTMLTTLVV), 248 to 268 (WWAVVTVMTRASTTITILAIF), and 285 to 305 (IVMFVSFATMLIQRLEQVVSF). The ABC transporter domain maps to 345–579 (VEFNDVSFSY…GGHFAQLAKA (235 aa)). Residue 378 to 385 (GPTGAGKS) participates in ATP binding.

Belongs to the ABC transporter superfamily. Beta-(1--&gt;2)glucan exporter (TC 3.A.1.108.1) family. In terms of assembly, homodimer.

Its subcellular location is the cell inner membrane. The enzyme catalyses [(1-&gt;2)-beta-D-glucosyl](n)(in) + ATP + H2O = [(1-&gt;2)-beta-D-glucosyl](n)(out) + ADP + phosphate + H(+). Functionally, involved in beta-(1--&gt;2)glucan export. Transmembrane domains (TMD) form a pore in the inner membrane and the ATP-binding domain (NBD) is responsible for energy generation. The polypeptide is Beta-(1--&gt;2)glucan export ATP-binding/permease protein NdvA (Nitrobacter winogradskyi (strain ATCC 25391 / DSM 10237 / CIP 104748 / NCIMB 11846 / Nb-255)).